We begin with the raw amino-acid sequence, 42 residues long: Photosystem I reaction center subunit IX (42 aa).

A helical transmembrane segment spans residues 7-27 (YLSTAPVLATLWFGFLAGLLI).

This sequence belongs to the PsaJ family.

It is found in the plastid. Its subcellular location is the chloroplast thylakoid membrane. In terms of biological role, may help in the organization of the PsaE and PsaF subunits. The sequence is that of Photosystem I reaction center subunit IX from Anthoceros angustus (Hornwort).